Here is a 303-residue protein sequence, read N- to C-terminus: Albumin b-32 (303 aa).

Positions 112–137 (ATPTSSATTPGGSASAAGTRTSSATR) are enriched in low complexity. The disordered stretch occupies residues 112-175 (ATPTSSATTP…GGGGADADAD (64 aa)). Residues 146 to 156 (ARDDQGRQRPG) are compositionally biased toward basic and acidic residues.

This sequence belongs to the ribosome-inactivating protein family. Type 1 RIP subfamily. As to quaternary structure, monomer. As to expression, endosperm.

It is found in the cytoplasm. The enzyme catalyses Endohydrolysis of the N-glycosidic bond at one specific adenosine on the 28S rRNA.. Its function is as follows. A possible regulatory factor for the synthesis of zeins, the major group of storage proteins. The protein is Albumin b-32 (O6) of Zea mays (Maize).